A 32-amino-acid chain; its full sequence is Dermaseptin-L1 (32 aa).

As to expression, expressed by the skin glands.

The protein localises to the secreted. In terms of biological role, antimicrobial peptide active against the Gram-negative bacterium E.coli (MIC=8 uM) but inactive against the Gram-positive bacterium S.aureus. Also inhibits growth of zoospores of the chytrid fungus B.dendrobatidis at high concentrations (above 25 uM). Shows anticancer activities since it is cytolytic against HepG2 human hepatoma-derived cells (LC(50)=45 uM). Is only weakly hemolytic on human erythrocytes. The protein is Dermaseptin-L1 of Agalychnis lemur (Lemur leaf frog).